An 85-amino-acid chain; its full sequence is Large ribosomal subunit protein eL34 (85 aa).

The protein belongs to the eukaryotic ribosomal protein eL34 family.

The polypeptide is Large ribosomal subunit protein eL34 (Saccharolobus islandicus (strain Y.N.15.51 / Yellowstone #2) (Sulfolobus islandicus)).